A 254-amino-acid chain; its full sequence is Imidazole glycerol phosphate synthase subunit HisF (254 aa).

Residues aspartate 11 and aspartate 130 contribute to the active site.

It belongs to the HisA/HisF family. In terms of assembly, heterodimer of HisH and HisF.

The protein resides in the cytoplasm. It catalyses the reaction 5-[(5-phospho-1-deoxy-D-ribulos-1-ylimino)methylamino]-1-(5-phospho-beta-D-ribosyl)imidazole-4-carboxamide + L-glutamine = D-erythro-1-(imidazol-4-yl)glycerol 3-phosphate + 5-amino-1-(5-phospho-beta-D-ribosyl)imidazole-4-carboxamide + L-glutamate + H(+). Its pathway is amino-acid biosynthesis; L-histidine biosynthesis; L-histidine from 5-phospho-alpha-D-ribose 1-diphosphate: step 5/9. Its function is as follows. IGPS catalyzes the conversion of PRFAR and glutamine to IGP, AICAR and glutamate. The HisF subunit catalyzes the cyclization activity that produces IGP and AICAR from PRFAR using the ammonia provided by the HisH subunit. This is Imidazole glycerol phosphate synthase subunit HisF from Chromobacterium violaceum (strain ATCC 12472 / DSM 30191 / JCM 1249 / CCUG 213 / NBRC 12614 / NCIMB 9131 / NCTC 9757 / MK).